The following is a 75-amino-acid chain: Exodeoxyribonuclease 7 small subunit (75 aa).

The protein belongs to the XseB family. Heterooligomer composed of large and small subunits.

The protein resides in the cytoplasm. It catalyses the reaction Exonucleolytic cleavage in either 5'- to 3'- or 3'- to 5'-direction to yield nucleoside 5'-phosphates.. In terms of biological role, bidirectionally degrades single-stranded DNA into large acid-insoluble oligonucleotides, which are then degraded further into small acid-soluble oligonucleotides. This chain is Exodeoxyribonuclease 7 small subunit, found in Chlamydia caviae (strain ATCC VR-813 / DSM 19441 / 03DC25 / GPIC) (Chlamydophila caviae).